The chain runs to 144 residues: Putative golgin subfamily A member 2B (144 aa).

2 disordered regions span residues 1–20 and 95–132; these read MDSE…PEDL and SCGR…EAAG. Positions 110–131 are enriched in gly residues; that stretch reads AEGGGVHQQAGPGQGRGEGEAA.

It belongs to the GOLGA2 family.

In Homo sapiens (Human), this protein is Putative golgin subfamily A member 2B (GOLGA2P5).